We begin with the raw amino-acid sequence, 514 residues long: MLFLRAAVLPGFWLPRVRRVQLVRSPAVTLPSPVRTVHAGSRVWGSAWAGGGPVRGGGEEDPREDEEEEEDELLRAPPLLPLDTQRVCVLHPDVKRPAGKKPRSTAEWQVAEAAALVRALPGWSVASTLVVPSAAPGSRLVFGKGNFQDVTEKIKGCQDITSVFLNVERMAPPTKKELESAWGLRVFDRFTLVLHIFRCNARTREARMQLALAEIPLLRSSVNTDSGQQDQQGWGSRYIMGSGESPTELRARALRDRELRLRRVLERLRDKRRLMRKERVRREFPVVSVVGYTNCGKTTLIQALTGEAALQPRDQPFATLDVTVHAGLLPSRLRILYVDTIGFLSQLPHNLIHAFSATLEDVAYSDVLVHVTDVSHPDAELQKATVLSTLRGLHLPPALLESALEVHSKVDLVPGYTPPCSGALAVSAISGRGLDELKAALEASVLRATGRQVLTLCVRLGGPQLGWLYKEAVVQQVQELPEGDAAHVTVVITQAAYGRFRKLFPIDAPSALPH.

The interval 48–71 (WAGGGPVRGGGEEDPREDEEEEED) is disordered. Positions 59–71 (EEDPREDEEEEED) are enriched in acidic residues. The Hflx-type G domain occupies 285–449 (PVVSVVGYTN…ALEASVLRAT (165 aa)). 2 residues coordinate Mg(2+): Thr298 and Thr319.

The protein belongs to the TRAFAC class OBG-HflX-like GTPase superfamily. HflX GTPase family. Requires Mg(2+) as cofactor.

In Mus musculus (Mouse), this protein is Putative GTP-binding protein 6 (Gtpbp6).